The sequence spans 573 residues: Proline--tRNA ligase (573 aa).

This sequence belongs to the class-II aminoacyl-tRNA synthetase family. ProS type 1 subfamily. Homodimer.

It localises to the cytoplasm. The catalysed reaction is tRNA(Pro) + L-proline + ATP = L-prolyl-tRNA(Pro) + AMP + diphosphate. In terms of biological role, catalyzes the attachment of proline to tRNA(Pro) in a two-step reaction: proline is first activated by ATP to form Pro-AMP and then transferred to the acceptor end of tRNA(Pro). As ProRS can inadvertently accommodate and process non-cognate amino acids such as alanine and cysteine, to avoid such errors it has two additional distinct editing activities against alanine. One activity is designated as 'pretransfer' editing and involves the tRNA(Pro)-independent hydrolysis of activated Ala-AMP. The other activity is designated 'posttransfer' editing and involves deacylation of mischarged Ala-tRNA(Pro). The misacylated Cys-tRNA(Pro) is not edited by ProRS. The polypeptide is Proline--tRNA ligase (Elusimicrobium minutum (strain Pei191)).